A 330-amino-acid polypeptide reads, in one-letter code: Phenylalanine--tRNA ligase alpha subunit (330 aa).

Glu246 lines the Mg(2+) pocket.

It belongs to the class-II aminoacyl-tRNA synthetase family. Phe-tRNA synthetase alpha subunit type 1 subfamily. As to quaternary structure, tetramer of two alpha and two beta subunits. Mg(2+) is required as a cofactor.

The protein resides in the cytoplasm. It catalyses the reaction tRNA(Phe) + L-phenylalanine + ATP = L-phenylalanyl-tRNA(Phe) + AMP + diphosphate + H(+). This Campylobacter jejuni subsp. jejuni serotype O:6 (strain 81116 / NCTC 11828) protein is Phenylalanine--tRNA ligase alpha subunit.